A 116-amino-acid chain; its full sequence is MSSMRAERVGEQMKKELMDIINNKVKDPRVGFITITDVVLTNDLSQAKVFLTVLGNDKEVENTFKALDKAKGFIKSELGSRMRLRIMPELMYEYDQSIEYGNKIERMIQDLHKQDR.

Belongs to the RbfA family. Monomer. Binds 30S ribosomal subunits, but not 50S ribosomal subunits or 70S ribosomes.

The protein localises to the cytoplasm. One of several proteins that assist in the late maturation steps of the functional core of the 30S ribosomal subunit. Associates with free 30S ribosomal subunits (but not with 30S subunits that are part of 70S ribosomes or polysomes). Required for efficient processing of 16S rRNA. May interact with the 5'-terminal helix region of 16S rRNA. This Staphylococcus aureus (strain JH9) protein is Ribosome-binding factor A.